A 619-amino-acid chain; its full sequence is Xyloglucan galactosyltransferase MUR3 (619 aa).

The segment at 1 to 26 (MFPRVSMRRRSAEVSPTEPMEKGNGK) is disordered. The Cytoplasmic segment spans residues 1–33 (MFPRVSMRRRSAEVSPTEPMEKGNGKNQTNRIC). The helical; Signal-anchor for type II membrane protein transmembrane segment at 34-54 (LLVALSLFFWALLLYFHFVVL) threads the bilayer. The Lumenal segment spans residues 55 to 619 (GTSNIDKQLQ…WKSEQRDKTQ (565 aa)). N-linked (GlcNAc...) asparagine glycans are attached at residues Asn116, Asn146, Asn231, Asn257, Asn319, Asn465, and Asn482. Residues 576–619 (HVWDPFFSKPKPGEDGSSDGNGGTTISADAAKNSWKSEQRDKTQ) are disordered. Residues 610-619 (WKSEQRDKTQ) are compositionally biased toward basic and acidic residues.

The protein belongs to the glycosyltransferase 47 family. In terms of assembly, interacts with CSLC4 and FUT1. Ubiquitous.

Its subcellular location is the golgi apparatus. The protein resides in the golgi stack membrane. It localises to the golgi apparatus membrane. Its function is as follows. Involved in the attachment of the Gal residue on the third xylosyl unit within the XXXG core structure of xyloglucan, the principal glycan that interlaces the cellulose microfibrils in plant cell wall. Associates with other xyloglucan-synthesizing enzymes to form multiprotein complexes for xyloglucan synthesis in the Golgi. Interacts with actin and is required for the proper endomembrane organization and for the cell elongation. Not involved in the trafficking from the endoplasmic reticulum to the vacuoles. Involved in salt stress tolerance. Participates in the control of the expression of genes encoding for proteins involved in reactive oxygen species (ROS) detoxification under salt stress. May contribute to the maintenance of the proper organization of actin microfilaments during salt stress-induced ROS production. This is Xyloglucan galactosyltransferase MUR3 from Arabidopsis thaliana (Mouse-ear cress).